Reading from the N-terminus, the 449-residue chain is Elongation factor 1-alpha 1 (449 aa).

Residues 5 to 230 enclose the tr-type G domain; that stretch reads KVHMNLVVVG…DMLEPPVRPS (226 aa). The G1 stretch occupies residues 14-21; the sequence is GHVDAGKS. GTP is bound at residue 14–21; it reads GHVDAGKS. Residues 70–74 form a G2 region; it reads GITID. A G3 region spans residues 91–94; the sequence is DAPG. GTP-binding positions include 91-95 and 153-156; these read DAPGH and NKMD. The G4 stretch occupies residues 153-156; that stretch reads NKMD. A G5 region spans residues 194 to 196; the sequence is SGW. Glu-362 is modified (5-glutamyl glycerylphosphorylethanolamine).

The protein belongs to the TRAFAC class translation factor GTPase superfamily. Classic translation factor GTPase family. EF-Tu/EF-1A subfamily. Phosphatidylethanolamine (PE) is a direct precursor of the ethanolamine-phosphoglycerol (EPG) moiety.

The protein localises to the cytoplasm. In terms of biological role, this protein promotes the GTP-dependent binding of aminoacyl-tRNA to the A-site of ribosomes during protein biosynthesis. The sequence is that of Elongation factor 1-alpha 1 (TEF1) from Trypanosoma brucei brucei (strain 927/4 GUTat10.1).